A 363-amino-acid chain; its full sequence is DNA repair protein rlp1 (363 aa).

Belongs to the RecA family. RAD51 subfamily. In terms of assembly, interacts with rdl1 and sws1.

The protein resides in the cytoplasm. It is found in the nucleus. Its function is as follows. Required for normal levels of meiotic recombination. Acts in the recombinational pathway of double-strand break (DSB) repair together with rhp51, rhp55 and rad22. Required for the full extent of DNA recombination and cell survival under condition of a replication fork collapse. The polypeptide is DNA repair protein rlp1 (Schizosaccharomyces pombe (strain 972 / ATCC 24843) (Fission yeast)).